We begin with the raw amino-acid sequence, 317 residues long: Prenyl transferase paxC (317 aa).

Substrate-binding residues include Lys-53 and His-86. 2 residues coordinate Mg(2+): Asp-93 and Asp-97. Arg-102, Lys-186, Thr-187, Gln-216, Asn-223, and Lys-233 together coordinate substrate.

This sequence belongs to the FPP/GGPP synthase family.

Its pathway is secondary metabolite biosynthesis. Its function is as follows. Prenyl transferase; part of the gene cluster that mediates the biosynthesis of paxalline, a mycotoxin that acts as an inhibitor of mammalian maxi-K channels. PaxG, the geranylgeranyl diphosphate (GGPP) synthase is proposed to catalyze the first step in paxilline biosynthesis. Condensation of indole-3-glycerol phosphate with GGPP by paxC then forms 3-geranylgeranylindole (3-GGI), followed by epoxidation and cyclization of this intermediate (by paxM and paxB) to form paspaline. Paspaline is subsequently converted to 13-desoxypaxilline by paxP, the latter being then converted to paxilline by paxQ. Finally paxilline can be mono- and di-prenylated by paxD. This is Prenyl transferase paxC from Penicillium paxilli.